The sequence spans 233 residues: UPF0758 protein Rcas_0037 (233 aa).

The 123-residue stretch at 107–229 (QIRSPTDAAQ…FVSMRERGLA (123 aa)) folds into the MPN domain. Positions 178, 180, and 191 each coordinate Zn(2+). Residues 178 to 191 (HNHPSGDPTPSPED) carry the JAMM motif motif.

It belongs to the UPF0758 family.

The protein is UPF0758 protein Rcas_0037 of Roseiflexus castenholzii (strain DSM 13941 / HLO8).